We begin with the raw amino-acid sequence, 98 residues long: Co-chaperonin GroES 1 (98 aa).

Belongs to the GroES chaperonin family. As to quaternary structure, heptamer of 7 subunits arranged in a ring. Interacts with the chaperonin GroEL.

Its subcellular location is the cytoplasm. Its function is as follows. Together with the chaperonin GroEL, plays an essential role in assisting protein folding. The GroEL-GroES system forms a nano-cage that allows encapsulation of the non-native substrate proteins and provides a physical environment optimized to promote and accelerate protein folding. GroES binds to the apical surface of the GroEL ring, thereby capping the opening of the GroEL channel. The chain is Co-chaperonin GroES 1 from Rhodopseudomonas palustris (strain ATCC BAA-98 / CGA009).